A 122-amino-acid polypeptide reads, in one-letter code: Ribosome-binding factor A (122 aa).

This sequence belongs to the RbfA family. Monomer. Binds 30S ribosomal subunits, but not 50S ribosomal subunits or 70S ribosomes.

It localises to the cytoplasm. Functionally, one of several proteins that assist in the late maturation steps of the functional core of the 30S ribosomal subunit. Associates with free 30S ribosomal subunits (but not with 30S subunits that are part of 70S ribosomes or polysomes). Required for efficient processing of 16S rRNA. May interact with the 5'-terminal helix region of 16S rRNA. The protein is Ribosome-binding factor A of Streptococcus agalactiae serotype III (strain NEM316).